Here is a 131-residue protein sequence, read N- to C-terminus: Maturin (131 aa).

Tyr-34 carries the post-translational modification Phosphotyrosine. Acidic residues predominate over residues 107-120 (FEEYSADVEEEEPE). The segment at 107–131 (FEEYSADVEEEEPEADHPQMGVSQQ) is disordered.

This sequence belongs to the MTURN family. In terms of processing, phosphorylation at Tyr-34 is essential for its ability to promote megakaryocyte differentiation. Expressed in the thymus, bone marrow and spleen.

The protein resides in the cytoplasm. Functionally, promotes megakaryocyte differentiation by enhancing ERK and JNK signaling as well as up-regulating RUNX1 and FLI1 expression. Represses NF-kappa-B transcriptional activity by inhibiting phosphorylation of RELA at 'Ser- 536'. May be involved in early neuronal development. This Mus musculus (Mouse) protein is Maturin (Mturn).